The sequence spans 400 residues: 1-deoxy-D-xylulose 5-phosphate reductoisomerase (400 aa).

NADPH contacts are provided by Thr17, Gly18, Ser19, Ile20, and Asn131. Lys132 provides a ligand contact to 1-deoxy-D-xylulose 5-phosphate. Glu133 is an NADPH binding site. Asp157 provides a ligand contact to Mn(2+). The 1-deoxy-D-xylulose 5-phosphate site is built by Ser158, Glu159, Ser188, and His211. Glu159 lines the Mn(2+) pocket. Gly217 contacts NADPH. Residues Ser224, Asn229, Lys230, and Glu233 each contribute to the 1-deoxy-D-xylulose 5-phosphate site. Residue Glu233 participates in Mn(2+) binding.

This sequence belongs to the DXR family. Requires Mg(2+) as cofactor. It depends on Mn(2+) as a cofactor.

It carries out the reaction 2-C-methyl-D-erythritol 4-phosphate + NADP(+) = 1-deoxy-D-xylulose 5-phosphate + NADPH + H(+). The protein operates within isoprenoid biosynthesis; isopentenyl diphosphate biosynthesis via DXP pathway; isopentenyl diphosphate from 1-deoxy-D-xylulose 5-phosphate: step 1/6. Functionally, catalyzes the NADPH-dependent rearrangement and reduction of 1-deoxy-D-xylulose-5-phosphate (DXP) to 2-C-methyl-D-erythritol 4-phosphate (MEP). This Pseudomonas putida (strain ATCC 700007 / DSM 6899 / JCM 31910 / BCRC 17059 / LMG 24140 / F1) protein is 1-deoxy-D-xylulose 5-phosphate reductoisomerase.